A 252-amino-acid chain; its full sequence is Probable phosphatase Shewana3_2794 (252 aa).

Histidine 8, histidine 10, histidine 16, histidine 41, glutamate 74, histidine 102, histidine 132, aspartate 193, and histidine 195 together coordinate Zn(2+).

It belongs to the PHP family. Requires Zn(2+) as cofactor.

This is Probable phosphatase Shewana3_2794 from Shewanella sp. (strain ANA-3).